Here is a 433-residue protein sequence, read N- to C-terminus: Chaperone SurA (433 aa).

An N-terminal signal peptide occupies residues Met1 to Ala24. PpiC domains follow at residues Asn175–Asp276 and Val285–Asp384.

The protein localises to the periplasm. It catalyses the reaction [protein]-peptidylproline (omega=180) = [protein]-peptidylproline (omega=0). Its function is as follows. Chaperone involved in the correct folding and assembly of outer membrane proteins. Recognizes specific patterns of aromatic residues and the orientation of their side chains, which are found more frequently in integral outer membrane proteins. May act in both early periplasmic and late outer membrane-associated steps of protein maturation. This chain is Chaperone SurA, found in Colwellia psychrerythraea (strain 34H / ATCC BAA-681) (Vibrio psychroerythus).